The following is a 510-amino-acid chain: MIWNNRLILALSLLLRLHLAISPSYIHPDEHFQGPEYALGNLFDWAHETTWEFRGDSPIRSFVPLWILYTAPLSVLNFLWKGQLSPREAYWFIRAGHALAYWILGDMALDRLSDSKKSKTKTLYLVGCSYVTWSYQSHTFSNSTETLLVLWCLVIIKESQQRHSMHHQRVHKFMDAGLLGLLIVIGTWNRVTFPLWLIVPGLTYLRKYLIHNISSLILLIASVALTAFFVIHVDSVHYDLEWTITPLNSFLYNSQGHNLAEHGIHNRLTHLVSNLPVLLGPLLILLRTPSQYWKSLQFQSAISGVFFLSLFPHQEARFLMPAVPLLISCYDINAVPRRFTSAIFLLSYVFNIIMGFLMGTLHQGGVVPAQHYLSKHVDSGSHTVVYWRTYKPPSWLLGIPEGELEILDKDHPLGTNLFKRVTDEIENIQIRHKKTMVTVLDLMGSSPEYVNDVIAALAPINPLLVAPVAGLKELDLPAYKEVWKTRFHLGLDHIDGLESLEPGLVVLEVL.

3 consecutive transmembrane segments (helical) span residues 7–27 (LILA…SYIH), 62–82 (FVPL…LWKG), and 89–109 (AYWF…DMAL). An N-linked (GlcNAc...) asparagine glycan is attached at N142. A helical membrane pass occupies residues 179–199 (LGLLIVIGTWNRVTFPLWLIV). N212 carries an N-linked (GlcNAc...) asparagine glycan. The next 3 helical transmembrane spans lie at 213–233 (ISSL…VIHV), 268–288 (LTHL…LLRT), and 339–359 (FTSA…FLMG).

It belongs to the glycosyltransferase 22 family. PIGZ subfamily.

It is found in the endoplasmic reticulum membrane. Its pathway is glycolipid biosynthesis; glycosylphosphatidylinositol-anchor biosynthesis. Alpha-1,2-mannosyltransferase involved in glycosylphosphatidylinositol-anchor biosynthesis. Transfers a fourth mannose to trimannosyl-GPIs during GPI precursor assembly. The presence of a fourth mannose in GPI is essential in fungi. This chain is GPI mannosyltransferase 4 (SMP3), found in Yarrowia lipolytica (strain CLIB 122 / E 150) (Yeast).